Consider the following 66-residue polypeptide: Large ribosomal subunit protein bL33 (66 aa).

This sequence belongs to the bacterial ribosomal protein bL33 family.

The chain is Large ribosomal subunit protein bL33 from Synechococcus sp. (strain CC9902).